The sequence spans 466 residues: Alpha-1A adrenergic receptor (466 aa).

Over 1-27 the chain is Extracellular; that stretch reads MVLLSENASEGSNCTHPPAPVNISKAI. Asparagine 7, asparagine 13, and asparagine 22 each carry an N-linked (GlcNAc...) asparagine glycan. Residues 28-51 traverse the membrane as a helical segment; it reads LLGVILGGLIIFGVLGNILVILSV. The Cytoplasmic portion of the chain corresponds to 52–64; that stretch reads ACHRHLHSVTHYY. The helical transmembrane segment at 65–88 threads the bilayer; it reads IVNLAVADLLLTSTVLPFSAIFEI. The Extracellular portion of the chain corresponds to 89–99; the sequence is LGYWAFGRVFC. A disulfide bridge connects residues cysteine 99 and cysteine 176. Residues 100–122 form a helical membrane-spanning segment; sequence NIWAAVDVLCCTASIMGLCIISI. At 123 to 143 the chain is on the cytoplasmic side; the sequence is DRYIGVSYPLRYPTIVTQRRG. A helical membrane pass occupies residues 144 to 167; the sequence is VRALLCVWVLSLVISIGPLFGWRQ. The Extracellular portion of the chain corresponds to 168-181; it reads PAPEDETICQINEE. A helical membrane pass occupies residues 182-205; that stretch reads PGYVLFSALGSFYVPLAIILVMYC. At 206–273 the chain is on the cytoplasmic side; sequence RVYVVAKRES…FSREKKAAKT (68 aa). Serine 215 carries the post-translational modification Phosphoserine; by PKA. A helical transmembrane segment spans residues 274–297; the sequence is LGIVVGCFVLCWLPFFLVMPIGSF. At 298–305 the chain is on the extracellular side; that stretch reads FPDFKPSE. Residues 306-329 form a helical membrane-spanning segment; it reads TVFKIVFWLGYLNSCINPIIYPCS. Topologically, residues 330–466 are cytoplasmic; that stretch reads SQEFKKAFQN…ISLGENGEEV (137 aa). A Nuclear localization signal motif is present at residues 334–349; sequence KKAFQNVLRIQCLRRR. Cysteine 345 carries S-palmitoyl cysteine lipidation.

It belongs to the G-protein coupled receptor 1 family. Adrenergic receptor subfamily. ADRA1A sub-subfamily. Homo- and heterooligomer. Heterooligomerizes with ADRA1B homooligomers in cardiac myocytes. Interacts with CAVIN4. C-terminal Ser or Thr residues may be phosphorylated. As to expression, abundant in heart, brain, aorta, vena cava, vas deferens, submaxillary gland, lung, and kidney. Found at lower levels in prostate, parotid gland and skeletal muscle.

The protein resides in the nucleus membrane. Its subcellular location is the cell membrane. It localises to the cytoplasm. It is found in the membrane. The protein localises to the caveola. Functionally, this alpha-adrenergic receptor mediates its action by association with G proteins that activate a phosphatidylinositol-calcium second messenger system. Its effect is mediated by G(q) and G(11) proteins. Nuclear ADRA1A-ADRA1B heterooligomers regulate phenylephrine (PE)-stimulated ERK signaling in cardiac myocytes. The sequence is that of Alpha-1A adrenergic receptor (Adra1a) from Rattus norvegicus (Rat).